The sequence spans 337 residues: Ketol-acid reductoisomerase (NAD(P)(+)) (337 aa).

The region spanning 2 to 187 (ARMFYDADAN…GCTRAGVIET (186 aa)) is the KARI N-terminal Rossmann domain. Residues 25–28 (FGSQ), Arg-48, and 88–91 (DEVQ) each bind NADP(+). Residue His-113 is part of the active site. Position 139 (Gly-139) interacts with NADP(+). The region spanning 188–333 (SFQEETETDL…AELRGMMPWL (146 aa)) is the KARI C-terminal knotted domain. 4 residues coordinate Mg(2+): Asp-196, Glu-200, Glu-232, and Glu-236. Ser-257 serves as a coordination point for substrate.

Belongs to the ketol-acid reductoisomerase family. Mg(2+) serves as cofactor.

The enzyme catalyses (2R)-2,3-dihydroxy-3-methylbutanoate + NAD(+) = (2S)-2-acetolactate + NADH + H(+). It carries out the reaction (2R)-2,3-dihydroxy-3-methylbutanoate + NADP(+) = (2S)-2-acetolactate + NADPH + H(+). The protein operates within amino-acid biosynthesis; L-isoleucine biosynthesis; L-isoleucine from 2-oxobutanoate: step 2/4. It functions in the pathway amino-acid biosynthesis; L-valine biosynthesis; L-valine from pyruvate: step 2/4. Functionally, involved in the biosynthesis of branched-chain amino acids (BCAA). Catalyzes an alkyl-migration followed by a ketol-acid reduction of (S)-2-acetolactate (S2AL) to yield (R)-2,3-dihydroxy-isovalerate. In the isomerase reaction, S2AL is rearranged via a Mg-dependent methyl migration to produce 3-hydroxy-3-methyl-2-ketobutyrate (HMKB). In the reductase reaction, this 2-ketoacid undergoes a metal-dependent reduction by NADPH or NADH to yield (R)-2,3-dihydroxy-isovalerate. The polypeptide is Ketol-acid reductoisomerase (NAD(P)(+)) (Syntrophomonas wolfei subsp. wolfei (strain DSM 2245B / Goettingen)).